Reading from the N-terminus, the 201-residue chain is B-cell CLL/lymphoma 7 protein family member A (201 aa).

Positions 46 to 201 (YKWVPVTEPK…GKIDSSSEES (156 aa)) are disordered. Residues 54-71 (PKSDDNKNKKKGKDDKYG) are compositionally biased toward basic and acidic residues. Polar residues-rich tracts occupy residues 73–83 (EVTTPENSSSP), 93–114 (SNQS…NTSP), and 133–142 (QYPSKQPSSG). Basic and acidic residues predominate over residues 158–167 (TSKRDSKSQG). Polar residues predominate over residues 168-179 (DSESFLDSSKSA). Residues 192 to 201 (GKIDSSSEES) are compositionally biased toward basic and acidic residues.

It belongs to the BCL7 family.

This is B-cell CLL/lymphoma 7 protein family member A (bcl7a) from Danio rerio (Zebrafish).